A 168-amino-acid polypeptide reads, in one-letter code: Protein C2-DOMAIN ABA-RELATED 3 (168 aa).

Positions 1–106 constitute a C2 domain; it reads MSLMDNLLGI…IEALRMELSG (106 aa). Ca(2+) is bound by residues Arg24, Asp25, Asp30, Asp76, His77, Asp78, and Asp84.

Belongs to the plant CAR protein family. In terms of assembly, binds to PYR/PYL/RCAR abscisic acid intracellular receptors in an ABA-independent manner, both at the plasma membrane and in the nucleus. Requires Ca(2+) as cofactor.

The protein localises to the cell membrane. The protein resides in the nucleus. Stimulates the GTPase/ATPase activities of Obg-like ATPases. Mediates the transient calcium-dependent interaction of PYR/PYL/RCAR abscisic acid (ABA) receptors with the plasma membrane and thus regulates ABA sensitivity. The polypeptide is Protein C2-DOMAIN ABA-RELATED 3 (Arabidopsis thaliana (Mouse-ear cress)).